Consider the following 160-residue polypeptide: UPF0262 protein Oant_0325 (160 aa).

Belongs to the UPF0262 family.

This Brucella anthropi (strain ATCC 49188 / DSM 6882 / CCUG 24695 / JCM 21032 / LMG 3331 / NBRC 15819 / NCTC 12168 / Alc 37) (Ochrobactrum anthropi) protein is UPF0262 protein Oant_0325.